The following is a 244-amino-acid chain: Cysteine-rich secretory protein 1 (244 aa).

The N-terminal stretch at 1–19 (MALMLVLFFLAAVLPPSLL) is a signal peptide. In terms of domain architecture, SCP spans 44-170 (SKHNQLRRMV…PLRYYYVCHY (127 aa)). Residue asparagine 145 is glycosylated (N-linked (GlcNAc...) asparagine). 5 cysteine pairs are disulfide-bonded: cysteine 190–cysteine 197, cysteine 193–cysteine 202, cysteine 206–cysteine 239, cysteine 215–cysteine 233, and cysteine 224–cysteine 237. The ShKT domain occupies 206-239 (CGHEDKYTNCKYLKKMLSCEHELLKKGCKATCLC).

Belongs to the CRISP family. In terms of tissue distribution, mainly found in the cauda epididymis where it is synthesized by the principal cells and secreted into the lumen. Binds to the heads of spermatozoa. Also expressed in the submandibular gland.

Its subcellular location is the cytoplasmic vesicle. The protein resides in the secretory vesicle. Its function is as follows. This protein is supposed to help spermatozoa undergo functional maturation while they move from the testis to the ductus deferens. The protein is Cysteine-rich secretory protein 1 (Crisp1) of Mus musculus (Mouse).